The primary structure comprises 205 residues: Recombination protein RecR (205 aa).

The C4-type zinc finger occupies Cys-58–Cys-75. The 100-residue stretch at Thr-83 to Pro-182 folds into the Toprim domain.

Belongs to the RecR family.

Functionally, may play a role in DNA repair. It seems to be involved in an RecBC-independent recombinational process of DNA repair. It may act with RecF and RecO. The sequence is that of Recombination protein RecR from Chlorobium phaeobacteroides (strain DSM 266 / SMG 266 / 2430).